Reading from the N-terminus, the 602-residue chain is Putative pentatricopeptide repeat-containing protein At1g12700, mitochondrial (602 aa).

Residues 1–95 (MMIKRSITTN…PSLVDFSRFF (95 aa)) constitute a mitochondrion transit peptide. PPR repeat units follow at residues 87-121 (SLVD…GIAH), 122-156 (NIYT…GYEP), 157-191 (DTTT…GCQP), 192-226 (DVVT…NVKA), 227-261 (DVFT…GIKS), 262-296 (SVVT…EIVP), 297-331 (NVIT…GISP), 332-366 (NIIT…KCSP), 367-401 (DIVT…GLVA), 402-436 (NAVT…GVLP), 437-471 (DVMT…KMDL), 472-506 (GIVM…GVKP), 507-541 (NVMT…GNAP), and 542-576 (NDCT…GFSA).

Belongs to the PPR family. P subfamily.

It is found in the mitochondrion. The sequence is that of Putative pentatricopeptide repeat-containing protein At1g12700, mitochondrial from Arabidopsis thaliana (Mouse-ear cress).